Reading from the N-terminus, the 296-residue chain is Glutamate 5-kinase (296 aa).

Lysine 15 is a binding site for ATP. Substrate contacts are provided by serine 55, aspartate 159, and asparagine 186. Residues 206–207 and 248–254 each bind ATP; these read SD and TGGIATK.

This sequence belongs to the glutamate 5-kinase family.

The protein resides in the cytoplasm. It catalyses the reaction L-glutamate + ATP = L-glutamyl 5-phosphate + ADP. Its pathway is amino-acid biosynthesis; L-proline biosynthesis; L-glutamate 5-semialdehyde from L-glutamate: step 1/2. Its function is as follows. Catalyzes the transfer of a phosphate group to glutamate to form L-glutamate 5-phosphate. The chain is Glutamate 5-kinase from Treponema pallidum (strain Nichols).